A 492-amino-acid chain; its full sequence is N-succinylglutamate 5-semialdehyde dehydrogenase (492 aa).

220–225 (GSASTG) contributes to the NAD(+) binding site. Residues Glu243 and Cys277 contribute to the active site.

Belongs to the aldehyde dehydrogenase family. AstD subfamily.

It carries out the reaction N-succinyl-L-glutamate 5-semialdehyde + NAD(+) + H2O = N-succinyl-L-glutamate + NADH + 2 H(+). Its pathway is amino-acid degradation; L-arginine degradation via AST pathway; L-glutamate and succinate from L-arginine: step 4/5. Catalyzes the NAD-dependent reduction of succinylglutamate semialdehyde into succinylglutamate. This is N-succinylglutamate 5-semialdehyde dehydrogenase from Salmonella dublin (strain CT_02021853).